The sequence spans 465 residues: uncharacterized protein (465 aa).

3 disordered regions span residues 95-173, 407-426, and 443-465; these read STST…RKDP, QEME…KSDK, and ANPI…SSKK. Positions 118 to 137 are enriched in basic residues; that stretch reads KTGSKKVTRSKKSKKTKRRS. The span at 138-150 shows a compositional bias: low complexity; sequence STTVTTTTISNSK. The segment covering 153-173 has biased composition (basic and acidic residues); it reads TPDKDKDSKDQRKQRTKRKDP. The segment covering 451-465 has biased composition (basic residues); that stretch reads MARRNRRSKGSSSKK.

This is an uncharacterized protein from Caenorhabditis elegans.